The primary structure comprises 209 residues: Histidine biosynthesis bifunctional protein HisIE (209 aa).

The phosphoribosyl-AMP cyclohydrolase stretch occupies residues 1 to 123; it reads MEIEKLLEQV…VLPIDYSLSI (123 aa). The tract at residues 124–209 is phosphoribosyl-ATP pyrophosphohydrolase; sequence LKELEEIIKR…VMNELRRRRK (86 aa).

The protein in the N-terminal section; belongs to the PRA-CH family. This sequence in the C-terminal section; belongs to the PRA-PH family.

The protein resides in the cytoplasm. It carries out the reaction 1-(5-phospho-beta-D-ribosyl)-ATP + H2O = 1-(5-phospho-beta-D-ribosyl)-5'-AMP + diphosphate + H(+). The catalysed reaction is 1-(5-phospho-beta-D-ribosyl)-5'-AMP + H2O = 1-(5-phospho-beta-D-ribosyl)-5-[(5-phospho-beta-D-ribosylamino)methylideneamino]imidazole-4-carboxamide. It participates in amino-acid biosynthesis; L-histidine biosynthesis; L-histidine from 5-phospho-alpha-D-ribose 1-diphosphate: step 2/9. It functions in the pathway amino-acid biosynthesis; L-histidine biosynthesis; L-histidine from 5-phospho-alpha-D-ribose 1-diphosphate: step 3/9. In Pyrococcus furiosus (strain ATCC 43587 / DSM 3638 / JCM 8422 / Vc1), this protein is Histidine biosynthesis bifunctional protein HisIE (hisI).